Here is a 403-residue protein sequence, read N- to C-terminus: Exodeoxyribonuclease 7 large subunit (403 aa).

Belongs to the XseA family. In terms of assembly, heterooligomer composed of large and small subunits.

Its subcellular location is the cytoplasm. It carries out the reaction Exonucleolytic cleavage in either 5'- to 3'- or 3'- to 5'-direction to yield nucleoside 5'-phosphates.. In terms of biological role, bidirectionally degrades single-stranded DNA into large acid-insoluble oligonucleotides, which are then degraded further into small acid-soluble oligonucleotides. The sequence is that of Exodeoxyribonuclease 7 large subunit from Clostridium botulinum (strain Okra / Type B1).